The primary structure comprises 708 residues: Outer capsid protein mu-1 (708 aa).

G2 carries N-myristoyl glycine; by host lipidation. N3, N12, N81, N110, N458, N482, N528, and N659 each carry an N-linked (GlcNAc...) asparagine; by host glycan. Residues P675–R708 are disordered.

The protein belongs to the orthoreovirus mu-1 protein family. As to quaternary structure, heterohexamer of three sigma-3 and three Mu-1 proteins. In terms of processing, cleaved during the endosomal proteolytic disassembly of the outer capsid. Mu-1 is proteolytically cleaved into mu-1N and mu-1C during the maturation step to generate the ISVP. Cleavage of mu-1 to mu-1C is dependent on myristoylation and binding to sigma-3 protein. Mu-1C is further cleaved into delta (59 kDa), and phi (13 kDa) segments during entry into the host cell cytoplasm. Post-translationally, mu-1 and mu-1N are N-terminally myristoylated. This acylation is essential for the membrane fusion activity.

Its subcellular location is the virion. The protein localises to the host cell membrane. The protein resides in the host endoplasmic reticulum. It localises to the host mitochondrion. Its function is as follows. Major outer capsid protein involved in host cell membrane penetration. In the endocytic compartment, outer-capsid protein sigma-3 is removed by cathepsin proteases, which exposes the viral membrane-penetration protein mu-1. Both myristoylated peptides mu-1N and phi are released during infectious subvirion particles (ISVP) formation in the endosome. They associate with host membranes and mu-1N induces permeabilization and delivery of transcriptionally active viral particles into the host cell cytoplasm. Seems to induce apoptosis in the host cell. The viral outer shell polypeptides, of which mu-1 is one, impose structural constraints that prevent elongation of nascent transcripts by the RNA-dependent RNA polymerase lambda-3. The polypeptide is Outer capsid protein mu-1 (M2) (Mammalia (T3D)).